A 385-amino-acid polypeptide reads, in one-letter code: Probable endopeptidase MT2245 (385 aa).

The span at 235-257 (AALPPGAPPGDGPAPGVAPPPGG) shows a compositional bias: pro residues. The tract at residues 235–268 (AALPPGAPPGDGPAPGVAPPPGGMPGLPFVQPDG) is disordered. The 116-residue stretch at 270-385 (GGDRTAVVQA…SGPIYDARRY (116 aa)) folds into the NlpC/P60 domain. Cys300 functions as the Nucleophile in the catalytic mechanism. His348 functions as the Proton acceptor in the catalytic mechanism. The active site involves His360.

This sequence belongs to the peptidase C40 family.

The sequence is that of Probable endopeptidase MT2245 from Mycobacterium tuberculosis (strain CDC 1551 / Oshkosh).